Reading from the N-terminus, the 454-residue chain is PC-esterase domain-containing protein 1A (454 aa).

This sequence belongs to the PC-esterase family.

This Homo sapiens (Human) protein is PC-esterase domain-containing protein 1A (PCED1A).